Here is a 305-residue protein sequence, read N- to C-terminus: Homoserine kinase (305 aa).

90 to 100 (PLARGLGSSAS) serves as a coordination point for ATP.

The protein belongs to the GHMP kinase family. Homoserine kinase subfamily.

The protein resides in the cytoplasm. It carries out the reaction L-homoserine + ATP = O-phospho-L-homoserine + ADP + H(+). The protein operates within amino-acid biosynthesis; L-threonine biosynthesis; L-threonine from L-aspartate: step 4/5. Functionally, catalyzes the ATP-dependent phosphorylation of L-homoserine to L-homoserine phosphate. The sequence is that of Homoserine kinase from Staphylococcus haemolyticus (strain JCSC1435).